A 180-amino-acid polypeptide reads, in one-letter code: Nucleoside triphosphate/diphosphate phosphatase (180 aa).

Arginine 26 (proton donor) is an active-site residue. Residues asparagine 90, aspartate 106, aspartate 108, aspartate 110, aspartate 123, and glutamate 126 each coordinate Mg(2+).

Belongs to the Ntdp family. Requires Mg(2+) as cofactor.

The catalysed reaction is a ribonucleoside 5'-triphosphate + H2O = a ribonucleoside 5'-diphosphate + phosphate + H(+). It carries out the reaction a ribonucleoside 5'-diphosphate + H2O = a ribonucleoside 5'-phosphate + phosphate + H(+). Has nucleoside phosphatase activity towards nucleoside triphosphates and nucleoside diphosphates. This chain is Nucleoside triphosphate/diphosphate phosphatase, found in Staphylococcus saprophyticus subsp. saprophyticus (strain ATCC 15305 / DSM 20229 / NCIMB 8711 / NCTC 7292 / S-41).